We begin with the raw amino-acid sequence, 123 residues long: Protein Wnt-3b (123 aa).

The O-palmitoleoyl serine; by PORCN moiety is linked to residue serine 1. The cysteines at positions 89 and 104 are disulfide-linked. A glycan (N-linked (GlcNAc...) asparagine) is linked at asparagine 90.

This sequence belongs to the Wnt family. Post-translationally, palmitoleoylation is required for efficient binding to frizzled receptors. Depalmitoleoylation leads to Wnt signaling pathway inhibition.

Its subcellular location is the secreted. The protein resides in the extracellular space. The protein localises to the extracellular matrix. In terms of biological role, ligand for members of the frizzled family of seven transmembrane receptors. Probable developmental protein. May be a signaling molecule which affects the development of discrete regions of tissues. Is likely to signal over only few cell diameters. In Plethodon jordani (Red-cheeked salamander), this protein is Protein Wnt-3b (WNT-3B).